We begin with the raw amino-acid sequence, 424 residues long: Tyrosine--tRNA ligase (424 aa).

Tyrosine 37 is an L-tyrosine binding site. The 'HIGH' region motif lies at 42–51 (PTADSLHIGS). L-tyrosine-binding residues include tyrosine 174 and glutamine 178. The 'KMSKS' region signature appears at 234-238 (KFGKT). Position 237 (lysine 237) interacts with ATP. An S4 RNA-binding domain is found at 357-422 (SGLIDALAAG…RGKKLYALVD (66 aa)).

Belongs to the class-I aminoacyl-tRNA synthetase family. TyrS type 1 subfamily. As to quaternary structure, homodimer.

It is found in the cytoplasm. It catalyses the reaction tRNA(Tyr) + L-tyrosine + ATP = L-tyrosyl-tRNA(Tyr) + AMP + diphosphate + H(+). Catalyzes the attachment of tyrosine to tRNA(Tyr) in a two-step reaction: tyrosine is first activated by ATP to form Tyr-AMP and then transferred to the acceptor end of tRNA(Tyr). The polypeptide is Tyrosine--tRNA ligase (Chromobacterium violaceum (strain ATCC 12472 / DSM 30191 / JCM 1249 / CCUG 213 / NBRC 12614 / NCIMB 9131 / NCTC 9757 / MK)).